The sequence spans 237 residues: Endonuclease V (237 aa).

Positions 46 and 114 each coordinate Mg(2+).

It belongs to the endonuclease V family. Mg(2+) is required as a cofactor.

The protein resides in the cytoplasm. The catalysed reaction is Endonucleolytic cleavage at apurinic or apyrimidinic sites to products with a 5'-phosphate.. In terms of biological role, DNA repair enzyme involved in the repair of deaminated bases. Selectively cleaves double-stranded DNA at the second phosphodiester bond 3' to a deoxyinosine leaving behind the intact lesion on the nicked DNA. This Xanthomonas oryzae pv. oryzae (strain PXO99A) protein is Endonuclease V.